The chain runs to 413 residues: Transposon Ty4-H Gag polyprotein (413 aa).

Positions 39–115 form a coiled coil; the sequence is RKVSIKDEQV…IQLLETNENN (77 aa). Residues 380–413 are disordered; the sequence is RQQQLKSSAKRTKVLEQDTKKVKQSVQQQKTGNY. Residues 403 to 413 are compositionally biased toward low complexity; that stretch reads QSVQQQKTGNY.

In terms of biological role, capsid protein (CA) is the structural component of the virus-like particle (VLP), forming the shell that encapsulates the retrotransposons dimeric RNA genome. In Saccharomyces cerevisiae (strain ATCC 204508 / S288c) (Baker's yeast), this protein is Transposon Ty4-H Gag polyprotein (TY4A-H).